Consider the following 112-residue polypeptide: Urease subunit beta (112 aa).

Belongs to the urease beta subunit family. As to quaternary structure, heterotrimer of UreA (gamma), UreB (beta) and UreC (alpha) subunits. Three heterotrimers associate to form the active enzyme.

It is found in the cytoplasm. It catalyses the reaction urea + 2 H2O + H(+) = hydrogencarbonate + 2 NH4(+). It participates in nitrogen metabolism; urea degradation; CO(2) and NH(3) from urea (urease route): step 1/1. This Polaromonas sp. (strain JS666 / ATCC BAA-500) protein is Urease subunit beta.